We begin with the raw amino-acid sequence, 431 residues long: Serine--tRNA ligase (431 aa).

235–237 contributes to the L-serine binding site; that stretch reads TAE. Residues 266-268 and Val282 contribute to the ATP site; that span reads RRE. An L-serine-binding site is contributed by Glu289. 353–356 serves as a coordination point for ATP; sequence EASS. Ser389 serves as a coordination point for L-serine.

This sequence belongs to the class-II aminoacyl-tRNA synthetase family. Type-1 seryl-tRNA synthetase subfamily. Homodimer. The tRNA molecule binds across the dimer.

The protein localises to the cytoplasm. It carries out the reaction tRNA(Ser) + L-serine + ATP = L-seryl-tRNA(Ser) + AMP + diphosphate + H(+). It catalyses the reaction tRNA(Sec) + L-serine + ATP = L-seryl-tRNA(Sec) + AMP + diphosphate + H(+). It participates in aminoacyl-tRNA biosynthesis; selenocysteinyl-tRNA(Sec) biosynthesis; L-seryl-tRNA(Sec) from L-serine and tRNA(Sec): step 1/1. Catalyzes the attachment of serine to tRNA(Ser). Is also able to aminoacylate tRNA(Sec) with serine, to form the misacylated tRNA L-seryl-tRNA(Sec), which will be further converted into selenocysteinyl-tRNA(Sec). The polypeptide is Serine--tRNA ligase (Pelodictyon phaeoclathratiforme (strain DSM 5477 / BU-1)).